A 152-amino-acid chain; its full sequence is Deoxyuridine 5'-triphosphate nucleotidohydrolase (152 aa).

Substrate is bound by residues 71–73 (RSG), Asn84, 88–90 (LID), and Met98.

This sequence belongs to the dUTPase family. Mg(2+) serves as cofactor.

The catalysed reaction is dUTP + H2O = dUMP + diphosphate + H(+). It functions in the pathway pyrimidine metabolism; dUMP biosynthesis; dUMP from dCTP (dUTP route): step 2/2. This enzyme is involved in nucleotide metabolism: it produces dUMP, the immediate precursor of thymidine nucleotides and it decreases the intracellular concentration of dUTP so that uracil cannot be incorporated into DNA. This Shewanella baltica (strain OS155 / ATCC BAA-1091) protein is Deoxyuridine 5'-triphosphate nucleotidohydrolase.